A 356-amino-acid polypeptide reads, in one-letter code: 1-deoxy-D-xylulose 5-phosphate reductoisomerase (356 aa).

NADPH is bound by residues threonine 7, glycine 8, serine 9, isoleucine 10, glycine 31, asparagine 33, and asparagine 111. Lysine 112 provides a ligand contact to 1-deoxy-D-xylulose 5-phosphate. NADPH is bound at residue glutamate 113. Mn(2+) is bound at residue aspartate 131. The 1-deoxy-D-xylulose 5-phosphate site is built by serine 132, glutamate 133, serine 155, and histidine 178. Residue glutamate 133 participates in Mn(2+) binding. Glycine 184 serves as a coordination point for NADPH. Serine 191, asparagine 196, lysine 197, and glutamate 200 together coordinate 1-deoxy-D-xylulose 5-phosphate. Glutamate 200 contributes to the Mn(2+) binding site.

The protein belongs to the DXR family. Mg(2+) serves as cofactor. It depends on Mn(2+) as a cofactor.

The catalysed reaction is 2-C-methyl-D-erythritol 4-phosphate + NADP(+) = 1-deoxy-D-xylulose 5-phosphate + NADPH + H(+). It participates in isoprenoid biosynthesis; isopentenyl diphosphate biosynthesis via DXP pathway; isopentenyl diphosphate from 1-deoxy-D-xylulose 5-phosphate: step 1/6. In terms of biological role, catalyzes the NADPH-dependent rearrangement and reduction of 1-deoxy-D-xylulose-5-phosphate (DXP) to 2-C-methyl-D-erythritol 4-phosphate (MEP). This Campylobacter jejuni subsp. jejuni serotype O:23/36 (strain 81-176) protein is 1-deoxy-D-xylulose 5-phosphate reductoisomerase.